The chain runs to 362 residues: Chemerin-like receptor 1 (362 aa).

Residues 1-37 lie on the Extracellular side of the membrane; sequence MEAEDYNASYEDYPDDVDPIVVLEELSPLEGRVVRIL. An N-linked (GlcNAc...) asparagine glycan is attached at asparagine 7. The helical transmembrane segment at 38 to 58 threads the bilayer; that stretch reads LVAVYSVICLLGILGNGLVIV. Topologically, residues 59–70 are cytoplasmic; it reads MITCKMKRTVNT. A helical membrane pass occupies residues 71-91; sequence VWFLNLAVADFLFNVFLPVHI. Over 92 to 108 the chain is Extracellular; the sequence is AYAALDYHWVFGTAMCK. Cysteine 107 and cysteine 184 form a disulfide bridge. A helical transmembrane segment spans residues 109–129; the sequence is ISNFLLIHNMFTSVFLLTVIS. Residues 130–151 lie on the Cytoplasmic side of the membrane; the sequence is FDRCVSVLLPVWSQNHRSVRLA. A helical transmembrane segment spans residues 152 to 172; sequence YTACLVIWVLAFFLSSPSLVF. At 173–219 the chain is on the extracellular side; it reads RDTARLHGKISCFNNFSLSAAVSSPWPAHPQVDPVGSGRHKVVTITR. N-linked (GlcNAc...) asparagine glycosylation is present at asparagine 187. The helical transmembrane segment at 220–240 threads the bilayer; it reads FLCGFLVPGLITTACYLTIVY. The Cytoplasmic portion of the chain corresponds to 241–255; sequence KLQRSRLAKTKKPFK. Residues 256-276 traverse the membrane as a helical segment; that stretch reads IILTIIVTFFLCWCPYHAFYL. At 277-281 the chain is on the extracellular side; that stretch reads LELRR. A helical transmembrane segment spans residues 282–302; the sequence is GSVPPSVFSLGVPLATAIAIA. The Cytoplasmic portion of the chain corresponds to 303–362; sequence NSCMNPILYVFMGQDFKKFRVALFSRLVNALSEDTGHSSYPSHRSFTKMSSMNERETGML. Serine 334 is subject to Phosphoserine. A disordered region spans residues 336-362; that stretch reads DTGHSSYPSHRSFTKMSSMNERETGML. Threonine 337 is subject to Phosphothreonine. The segment covering 339-354 has biased composition (polar residues); the sequence is HSSYPSHRSFTKMSSM. Serine 344, serine 347, and serine 353 each carry phosphoserine.

Belongs to the chemokine-like receptor (CMKLR) family. As to expression, widely expressed in several tissues including adipose, muscle, liver and brain.

It localises to the cell membrane. Functionally, receptor for the chemoattractant adipokine chemerin/RARRES2 and for the omega-3 fatty acid derived molecule resolvin E1. Interaction with RARRES2 initiates activation of G proteins G(i)/G(o) and beta-arrestin pathways inducing cellular responses via second messenger pathways such as intracellular calcium mobilization, phosphorylation of MAP kinases MAPK1/MAPK3 (ERK1/2), TYRO3, MAPK14/P38MAPK and PI3K leading to multifunctional effects, like, reduction of immune responses, enhancing of adipogenesis and angionesis. Resolvin E1 down-regulates cytokine production in macrophages by reducing the activation of MAPK1/3 (ERK1/2) and NF-kappa-B. Positively regulates adipogenesis and adipocyte metabolism. This Bos taurus (Bovine) protein is Chemerin-like receptor 1 (CMLKR1).